Reading from the N-terminus, the 360-residue chain is Phospho-N-acetylmuramoyl-pentapeptide-transferase (360 aa).

Helical transmembrane passes span 26–46, 74–94, 97–117, 134–154, 168–188, 199–219, 236–256, 263–283, 288–308, and 338–358; these read AILGLLTALVFSLWFGPKLIE, MGGLLILAAIFISVLLWGDLG, YVWVMLFVLGSFGLIGFIDDY, YILQSLAALLIAFFLYATAAN, VMPQLGAVFIVLAYFTIVGSS, GLAIMPTVMVAAAFALIAYLS, SGELVIVCTAIVGAGLGFLWF, VFMGDVGSLSLGAALGTIAVL, ILLVIMGGVFVMETLSVILQV, and VIVRFWIISIFLVLLGLATLK.

It belongs to the glycosyltransferase 4 family. MraY subfamily. Requires Mg(2+) as cofactor.

Its subcellular location is the cell inner membrane. The catalysed reaction is UDP-N-acetyl-alpha-D-muramoyl-L-alanyl-gamma-D-glutamyl-meso-2,6-diaminopimeloyl-D-alanyl-D-alanine + di-trans,octa-cis-undecaprenyl phosphate = di-trans,octa-cis-undecaprenyl diphospho-N-acetyl-alpha-D-muramoyl-L-alanyl-D-glutamyl-meso-2,6-diaminopimeloyl-D-alanyl-D-alanine + UMP. The protein operates within cell wall biogenesis; peptidoglycan biosynthesis. Its function is as follows. Catalyzes the initial step of the lipid cycle reactions in the biosynthesis of the cell wall peptidoglycan: transfers peptidoglycan precursor phospho-MurNAc-pentapeptide from UDP-MurNAc-pentapeptide onto the lipid carrier undecaprenyl phosphate, yielding undecaprenyl-pyrophosphoryl-MurNAc-pentapeptide, known as lipid I. This Shewanella baltica (strain OS195) protein is Phospho-N-acetylmuramoyl-pentapeptide-transferase.